The chain runs to 233 residues: MGRGKVQVRRIENEVSRQVTFSKRRPGLLKKAHEIAVLCDVDVAAIVFSAKGNLFHYASSHTTMERILEKYDRHELLSEGNNVIEEFPELEGSMSYDHIKLRGRIEALKKSQRNLMGQELDSLTLQDIQQLENQIDTSLNNIRSRKEKLLMEKNTILEKKITELETLHTCIRASPTKAAAPPACNTADAFVPNLNICCGDSGEPETVTAPLGWTSSNNGLPWWMLQSSSNGKS.

Residues 1–61 (MGRGKVQVRR…GNLFHYASSH (61 aa)) enclose the MADS-box domain. The region spanning 91–184 (EGSMSYDHIK…PTKAAAPPAC (94 aa)) is the K-box domain.

As to expression, expressed in developing seeds and seedling shoots.

The protein localises to the nucleus. In terms of biological role, probable transcription factor. The sequence is that of MADS-box transcription factor 20 (MADS20) from Oryza sativa subsp. japonica (Rice).